The sequence spans 792 residues: Phenylalanine--tRNA ligase beta subunit (792 aa).

Residues 39–147 (GEALDLILVA…EDAPIGTPLA (109 aa)) enclose the tRNA-binding domain. Positions 400-475 (PAPASILLRR…RIRGYEHLPT (76 aa)) constitute a B5 domain. Asp-453, Asp-459, Glu-462, and Glu-463 together coordinate Mg(2+). The FDX-ACB domain occupies 698 to 791 (SRFPFVRRDL…IQQRHDVRIR (94 aa)).

The protein belongs to the phenylalanyl-tRNA synthetase beta subunit family. Type 1 subfamily. Tetramer of two alpha and two beta subunits. Mg(2+) serves as cofactor.

Its subcellular location is the cytoplasm. It carries out the reaction tRNA(Phe) + L-phenylalanine + ATP = L-phenylalanyl-tRNA(Phe) + AMP + diphosphate + H(+). The chain is Phenylalanine--tRNA ligase beta subunit from Xylella fastidiosa (strain Temecula1 / ATCC 700964).